The following is a 491-amino-acid chain: 2-aminomuconic 6-semialdehyde dehydrogenase (491 aa).

Active-site residues include Glu252 and Cys286.

It belongs to the aldehyde dehydrogenase family. In terms of assembly, homotrimer.

It catalyses the reaction 2-aminomuconate 6-semialdehyde + NAD(+) + H2O = (2Z,4E)-2-aminomuconate + NADH + 2 H(+). With respect to regulation, strongly inhibited by Ag(+) and Hg(+), and comnpletely inhibited by p-chloromercuribenzoic acid. Functionally, involved in the modified meta-cleavage pathway for 2-aminophenol catabolism. The enzyme is also active toward 2-hydroxymuconic 6-semialdehyde, acetaldehyde, propionaldehyde, and butyraldehyde. The sequence is that of 2-aminomuconic 6-semialdehyde dehydrogenase (amnC) from Pseudomonas sp.